We begin with the raw amino-acid sequence, 116 residues long: Small ribosomal subunit protein bS16 (116 aa).

A disordered region spans residues 88–116 (RNNPKAAVPGKRMAELAKKKAERAAASAE). The span at 99 to 110 (RMAELAKKKAER) shows a compositional bias: basic and acidic residues.

This sequence belongs to the bacterial ribosomal protein bS16 family.

This chain is Small ribosomal subunit protein bS16, found in Cereibacter sphaeroides (strain ATCC 17025 / ATH 2.4.3) (Rhodobacter sphaeroides).